The following is a 290-amino-acid chain: UBX domain-containing protein 1-B (290 aa).

The region spanning 1 to 42 is the UBA domain; it reads MADCSALESLIEMGFSPSRAEKALSATGNQGIEPAMDWLVEH. The disordered stretch occupies residues 49–210; it reads KEPSVVIPED…VQEPPTKKEY (162 aa). Basic and acidic residues-rich tracts occupy residues 80 to 117 and 132 to 172; these read PLTE…EQEK and RMQE…DRAR. A coiled-coil region spans residues 81-171; sequence LTEEEKEKQT…KIARDKADRA (91 aa). A compositionally biased stretch (low complexity) spans 185–201; sequence PAETSVPATAPSPSSPV. The UBX domain occupies 208 to 287; the sequence is KEYDQCRIQV…GLVPTAVLIV (80 aa).

It localises to the cytoplasm. Component of a complex required to couple deglycosylation and proteasome-mediated degradation of misfolded proteins in the endoplasmic reticulum that are retrotranslocated in the cytosol. Involved in ubiquitin-proteasome systems. The protein is UBX domain-containing protein 1-B (ubxn1-b) of Xenopus laevis (African clawed frog).